Here is a 29-residue protein sequence, read N- to C-terminus: Cytochrome b6-f complex subunit 8 (29 aa).

The helical transmembrane segment at 3–23 threads the bilayer; sequence ILTLGWVSILALFTWSIAMVV.

It belongs to the PetN family. As to quaternary structure, the 4 large subunits of the cytochrome b6-f complex are cytochrome b6, subunit IV (17 kDa polypeptide, PetD), cytochrome f and the Rieske protein, while the 4 small subunits are PetG, PetL, PetM and PetN. The complex functions as a dimer.

The protein localises to the cellular thylakoid membrane. In terms of biological role, component of the cytochrome b6-f complex, which mediates electron transfer between photosystem II (PSII) and photosystem I (PSI), cyclic electron flow around PSI, and state transitions. This chain is Cytochrome b6-f complex subunit 8, found in Microcystis aeruginosa (strain NIES-843 / IAM M-2473).